The following is a 1113-amino-acid chain: Period circadian protein homolog 3 (1113 aa).

The segment at methionine 1–asparagine 48 is disordered. The Nuclear export signal 1 motif lies at leucine 54–lysine 63. PAS domains are found at residues leucine 120 to leucine 187 and tyrosine 258 to lysine 324. The region spanning histidine 333 to proline 376 is the PAC domain. Positions leucine 399–leucine 408 match the Nuclear export signal 3 motif. Positions glycine 418–serine 427 are enriched in low complexity. Disordered regions lie at residues glycine 418–glutamate 451, valine 485–tyrosine 530, threonine 561–aspartate 580, histidine 718–serine 742, and leucine 871–serine 906. Composition is skewed to polar residues over residues glutamine 428–serine 441 and phenylalanine 501–tyrosine 530. Positions leucine 551–histidine 750 are CSNK1E binding domain. Residues glutamate 566–aspartate 580 show a composition bias toward basic and acidic residues. The Nuclear localization signal signature appears at serine 719–proline 735. Over residues arginine 889–glutamate 901 the composition is skewed to basic and acidic residues. Phosphoserine is present on serine 907. Residues leucine 913–glutamate 920 carry the Nuclear export signal 2 motif. The disordered stretch occupies residues glutamate 921 to glycine 1010. The segment covering alanine 962 to threonine 986 has biased composition (low complexity). The segment covering serine 993 to alanine 1007 has biased composition (basic and acidic residues). The segment at glutamate 1035 to serine 1113 is CRY binding domain.

In terms of assembly, homodimer. Component of the circadian core oscillator, which includes the CRY proteins, CLOCK or NPAS2, BMAL1 or BMAL2, CSNK1D and/or CSNK1E, TIMELESS and the PER proteins. Interacts directly with PER1, PER2, CRY1, CRY2, and TIMELESS; interaction with CRY1 and CRY2 is weak and not rhythmic. Interacts with FBXW11 and BTRC. In terms of processing, phosphorylation by CSNK1E is weak and appears to require association with PER1 and translocation to the nucleus. Ubiquitinated. Widely expressed. Expressed in heart, brain, lung, liver, skeletal muscle, testis, and at low level in the spleen and kidney. In brain, mainly found in the SCN, hippocampus, piriform cortex, and cerebellum. Lower level of expression in the neocortex. Expression exhibits synchronous oscillations in liver, skeletal muscle and testis.

The protein localises to the cytoplasm. Its subcellular location is the nucleus. In terms of biological role, originally described as a core component of the circadian clock. The circadian clock, an internal time-keeping system, regulates various physiological processes through the generation of approximately 24 hour circadian rhythms in gene expression, which are translated into rhythms in metabolism and behavior. It is derived from the Latin roots 'circa' (about) and 'diem' (day) and acts as an important regulator of a wide array of physiological functions including metabolism, sleep, body temperature, blood pressure, endocrine, immune, cardiovascular, and renal function. Consists of two major components: the central clock, residing in the suprachiasmatic nucleus (SCN) of the brain, and the peripheral clocks that are present in nearly every tissue and organ system. Both the central and peripheral clocks can be reset by environmental cues, also known as Zeitgebers (German for 'timegivers'). The predominant Zeitgeber for the central clock is light, which is sensed by retina and signals directly to the SCN. The central clock entrains the peripheral clocks through neuronal and hormonal signals, body temperature and feeding-related cues, aligning all clocks with the external light/dark cycle. Circadian rhythms allow an organism to achieve temporal homeostasis with its environment at the molecular level by regulating gene expression to create a peak of protein expression once every 24 hours to control when a particular physiological process is most active with respect to the solar day. Transcription and translation of core clock components (CLOCK, NPAS2, BMAL1, BMAL2, PER1, PER2, PER3, CRY1 and CRY2) plays a critical role in rhythm generation, whereas delays imposed by post-translational modifications (PTMs) are important for determining the period (tau) of the rhythms (tau refers to the period of a rhythm and is the length, in time, of one complete cycle). A diurnal rhythm is synchronized with the day/night cycle, while the ultradian and infradian rhythms have a period shorter and longer than 24 hours, respectively. Disruptions in the circadian rhythms contribute to the pathology of cardiovascular diseases, cancer, metabolic syndromes and aging. A transcription/translation feedback loop (TTFL) forms the core of the molecular circadian clock mechanism. Transcription factors, CLOCK or NPAS2 and BMAL1 or BMAL2, form the positive limb of the feedback loop, act in the form of a heterodimer and activate the transcription of core clock genes and clock-controlled genes (involved in key metabolic processes), harboring E-box elements (5'-CACGTG-3') within their promoters. The core clock genes: PER1/2/3 and CRY1/2 which are transcriptional repressors form the negative limb of the feedback loop and interact with the CLOCK|NPAS2-BMAL1|BMAL2 heterodimer inhibiting its activity and thereby negatively regulating their own expression. This heterodimer also activates nuclear receptors NR1D1, NR1D2, RORA, RORB and RORG, which form a second feedback loop and which activate and repress BMAL1 transcription, respectively. Has a redundant role with the other PER proteins PER1 and PER2 and is not essential for the circadian rhythms maintenance. In contrast, plays an important role in sleep-wake timing and sleep homeostasis probably through the transcriptional regulation of sleep homeostasis-related genes, without influencing circadian parameters. Can bind heme. This Mus musculus (Mouse) protein is Period circadian protein homolog 3 (Per3).